The primary structure comprises 187 residues: Homeobox expressed in ES cells 1-B (187 aa).

Positions 110 to 169 form a DNA-binding region, homeobox; that stretch reads GRRPRTAFTRSQIEILENVFRVNSYPGIDVREELASKLALDEDRIQIWFQNRRAKLKRSH.

The protein belongs to the ANF homeobox family. In terms of assembly, the N-terminus interacts with the LIM 2 domain of zyx. In terms of tissue distribution, first expressed at a low level in the late blastula stage (stage 9) in most cells of the animal half of the embryo. Following this, predominantly expressed in two zones; the dorsal blastopore lip (Spemann organizer) at the beginning of gastrulation, and subsequently in the anterior part of the neural anlage (the region of future forebrain).

Its subcellular location is the nucleus. Functionally, regulates the earliest stages of development of the anterior neural plate. Plays a role in forebrain development by inhibiting the expression of otx2 and pax6 in the rostral region of the anterior neural plate. Necessary for both neural differentiation and neural patterning. Controls Spemann organizer development. May act as a transcriptional repressor. This chain is Homeobox expressed in ES cells 1-B (hesx1-b), found in Xenopus laevis (African clawed frog).